Here is a 115-residue protein sequence, read N- to C-terminus: Large ribosomal subunit protein uL22 (115 aa).

It belongs to the universal ribosomal protein uL22 family. Part of the 50S ribosomal subunit.

In terms of biological role, this protein binds specifically to 23S rRNA; its binding is stimulated by other ribosomal proteins, e.g. L4, L17, and L20. It is important during the early stages of 50S assembly. It makes multiple contacts with different domains of the 23S rRNA in the assembled 50S subunit and ribosome. The globular domain of the protein is located near the polypeptide exit tunnel on the outside of the subunit, while an extended beta-hairpin is found that lines the wall of the exit tunnel in the center of the 70S ribosome. The sequence is that of Large ribosomal subunit protein uL22 from Limosilactobacillus fermentum (strain NBRC 3956 / LMG 18251) (Lactobacillus fermentum).